The following is a 122-amino-acid chain: Large ribosomal subunit protein bL12 (122 aa).

It belongs to the bacterial ribosomal protein bL12 family. As to quaternary structure, homodimer. Part of the ribosomal stalk of the 50S ribosomal subunit. Forms a multimeric L10(L12)X complex, where L10 forms an elongated spine to which 2 to 4 L12 dimers bind in a sequential fashion. Binds GTP-bound translation factors.

Forms part of the ribosomal stalk which helps the ribosome interact with GTP-bound translation factors. Is thus essential for accurate translation. In Staphylococcus aureus (strain Mu50 / ATCC 700699), this protein is Large ribosomal subunit protein bL12.